The chain runs to 400 residues: Cytohesin-2 (400 aa).

The stretch at aspartate 10 to methionine 67 forms a coiled coil. Positions phenylalanine 72–asparagine 201 constitute an SEC7 domain. A PH domain is found at asparagine 259–serine 376. A 1,2-diacyl-sn-glycero-3-phospho-(1D-myo-inositol-3,4,5-trisphosphate) is bound by residues lysine 268 to threonine 276, arginine 280, tyrosine 291, arginine 301, lysine 339, asparagine 350, and histidine 351. The interval arginine 387–lysine 395 is C-terminal autoinhibitory region.

As to quaternary structure, heteromer. Composed of TAMALIN, CYTH2 and at least one GRM1. Interacts with ARRB1. Interacts with ARL4D; the interaction is direct. Directly interacts with CCDC120 through the coiled coil domain; this interaction stabilizes CCDC120, possibly by preventing its ubiquitination, and is required for neurite growth in a neuroblastoma cell line. Interacts with FRMD4A. Interacts (via N-terminal domain) with INAVA (via N-terminal domain). Present in all tissues tested, with highest protein levels in brain and adrenal.

The protein localises to the cell membrane. It is found in the cytoplasm. It localises to the cell projection. Its subcellular location is the growth cone. The protein resides in the cell junction. The protein localises to the tight junction. It is found in the adherens junction. Its function is as follows. Acts as a guanine-nucleotide exchange factor (GEF). Promotes guanine-nucleotide exchange on ARF1, ARF3 and ARF6. Activates ARF factors through replacement of GDP with GTP. The cell membrane form, in association with ARL4 proteins, recruits ARF6 to the plasma membrane. Involved in neurite growth. This is Cytohesin-2 (Cyth2) from Mus musculus (Mouse).